Consider the following 90-residue polypeptide: Molybdopterin synthase sulfur carrier subunit (90 aa).

Gly90 is modified (1-thioglycine; alternate). Gly90 bears the Glycyl adenylate; alternate mark.

Belongs to the MoaD family. MOCS2A subfamily. In terms of assembly, heterotetramer; composed of 2 small (Mocs2A) and 2 large (Mocs2B) subunits. In terms of processing, C-terminal thiocarboxylation occurs in 2 steps, it is first acyl-adenylated (-COAMP) via the hesA/moeB/thiF part of MOCS3, then thiocarboxylated (-COSH) via the rhodanese domain of MOCS3.

The protein resides in the cytoplasm. It functions in the pathway cofactor biosynthesis; molybdopterin biosynthesis. Its function is as follows. Acts as a sulfur carrier required for molybdopterin biosynthesis. Component of the molybdopterin synthase complex that catalyzes the conversion of precursor Z into molybdopterin by mediating the incorporation of 2 sulfur atoms into precursor Z to generate a dithiolene group. In the complex, serves as sulfur donor by being thiocarboxylated (-COSH) at its C-terminus by MOCS3. After interaction with Mocs2B, the sulfur is then transferred to precursor Z to form molybdopterin. The polypeptide is Molybdopterin synthase sulfur carrier subunit (Drosophila sechellia (Fruit fly)).